Reading from the N-terminus, the 219-residue chain is Tetratricopeptide repeat protein 9A (219 aa).

The tract at residues 1–49 is disordered; that stretch reads MERKGLAARSSGNPSPPALGEGPRPVPPPCVPSGGGAPERGQAGTAAEP. One copy of the TPR 1 repeat lies at 56 to 89; the sequence is AHEFKSQGAQCYKDKKFREAIGKYHRALLELKGL. A disordered region spans residues 94-115; the sequence is EERDARPASSAGVPKSSRLSEE. Residue serine 102 is modified to Phosphoserine. TPR repeat units lie at residues 125–160 and 161–194; these read IDCY…EGEN and FKAL…QPTD.

This sequence belongs to the TTC9 family.

The chain is Tetratricopeptide repeat protein 9A (Ttc9) from Mus musculus (Mouse).